The primary structure comprises 505 residues: Glycerol kinase (505 aa).

Residue threonine 15 participates in ADP binding. Residues threonine 15, threonine 16, and serine 17 each contribute to the ATP site. Threonine 15 is a sn-glycerol 3-phosphate binding site. ADP is bound at residue arginine 19. Sn-glycerol 3-phosphate-binding residues include arginine 85, glutamate 86, tyrosine 136, and aspartate 249. Glycerol contacts are provided by arginine 85, glutamate 86, tyrosine 136, aspartate 249, and glutamine 250. Threonine 271 and glycine 314 together coordinate ADP. Residues threonine 271, glycine 314, glutamine 318, and glycine 415 each contribute to the ATP site. ADP contacts are provided by glycine 415 and asparagine 419.

It belongs to the FGGY kinase family.

It carries out the reaction glycerol + ATP = sn-glycerol 3-phosphate + ADP + H(+). It participates in polyol metabolism; glycerol degradation via glycerol kinase pathway; sn-glycerol 3-phosphate from glycerol: step 1/1. Inhibited by fructose 1,6-bisphosphate (FBP). Functionally, key enzyme in the regulation of glycerol uptake and metabolism. Catalyzes the phosphorylation of glycerol to yield sn-glycerol 3-phosphate. The polypeptide is Glycerol kinase (Mycoplasma mycoides subsp. mycoides SC (strain CCUG 32753 / NCTC 10114 / PG1)).